Consider the following 472-residue polypeptide: MISTGKAFIHENFMLQNKTAETLYHTYAKTLPIIDYHCHVPPQEIAENRQFNNISEIWLHGDHYKWRAMRAVGVEETFITGDGDDKEKFLKWAETVPYTMGNPLYHWTHLELKRYFGIDELLSSETAEAIWSATKEQLAAPERSVQGIIKESNVKVICTTDDPSDHLEAHQQIRKEGACQAAVYPAFRPDKALVASAPSFVPYLETLGAAAEVDISSLRSLLEALEKRATFFAEEGCVLSDHGLRTLPFVDTTEKEAEAAFQKALNQETLTPQEEEKYQTYVLLFLARLYNKLGWTMQFHLGALRNNNSRMVEQVGPDSGFDSMADDRFAESLNRFLNELERTNELPKTILYTLNPIFNEVIATTIGNFQGGGIPGKIQFGSGWWFNDTKDGMEKQMTDLANNGLLSLFVGMLTDSRSFLSYTRHEYFRRILCNRIGEWVERGEWPADEKWLGKVVEDISYYNAKRYFAFPK.

Belongs to the metallo-dependent hydrolases superfamily. Uronate isomerase family.

It carries out the reaction D-glucuronate = D-fructuronate. It catalyses the reaction aldehydo-D-galacturonate = keto-D-tagaturonate. The protein operates within carbohydrate metabolism; pentose and glucuronate interconversion. The protein is Uronate isomerase of Shouchella clausii (strain KSM-K16) (Alkalihalobacillus clausii).